Reading from the N-terminus, the 313-residue chain is Porphobilinogen deaminase (313 aa).

At Cys-242 the chain carries S-(dipyrrolylmethanemethyl)cysteine.

It belongs to the HMBS family. Monomer. Requires dipyrromethane as cofactor.

It carries out the reaction 4 porphobilinogen + H2O = hydroxymethylbilane + 4 NH4(+). It participates in porphyrin-containing compound metabolism; protoporphyrin-IX biosynthesis; coproporphyrinogen-III from 5-aminolevulinate: step 2/4. Its function is as follows. Tetrapolymerization of the monopyrrole PBG into the hydroxymethylbilane pre-uroporphyrinogen in several discrete steps. The polypeptide is Porphobilinogen deaminase (Pectobacterium carotovorum subsp. carotovorum (strain PC1)).